Here is a 38-residue protein sequence, read N- to C-terminus: Large ribosomal subunit protein bL36 (38 aa).

The protein belongs to the bacterial ribosomal protein bL36 family.

The chain is Large ribosomal subunit protein bL36 from Paraburkholderia phymatum (strain DSM 17167 / CIP 108236 / LMG 21445 / STM815) (Burkholderia phymatum).